We begin with the raw amino-acid sequence, 159 residues long: Protein-export protein SecB (159 aa).

This sequence belongs to the SecB family. As to quaternary structure, homotetramer, a dimer of dimers. One homotetramer interacts with 1 SecA dimer.

The protein localises to the cytoplasm. In terms of biological role, one of the proteins required for the normal export of preproteins out of the cell cytoplasm. It is a molecular chaperone that binds to a subset of precursor proteins, maintaining them in a translocation-competent state. It also specifically binds to its receptor SecA. This is Protein-export protein SecB from Aromatoleum aromaticum (strain DSM 19018 / LMG 30748 / EbN1) (Azoarcus sp. (strain EbN1)).